The chain runs to 122 residues: Small ribosomal subunit protein uS12cz/uS12cy (122 aa).

It belongs to the universal ribosomal protein uS12 family. In terms of assembly, part of the 30S ribosomal subunit.

The protein resides in the plastid. The protein localises to the chloroplast. Its function is as follows. With S4 and S5 plays an important role in translational accuracy. Located at the interface of the 30S and 50S subunits. The chain is Small ribosomal subunit protein uS12cz/uS12cy (rps12-A) from Triticum aestivum (Wheat).